The following is a 520-amino-acid chain: GMP synthase [glutamine-hydrolyzing] (520 aa).

The 193-residue stretch at 13–205 (KIIVLDYGSQ…ALNICKAKGD (193 aa)) folds into the Glutamine amidotransferase type-1 domain. The active-site Nucleophile is the cysteine 90. Active-site residues include histidine 179 and glutamate 181. Residues 206–395 (WSMDNFIDMQ…LGMPDHIVWR (190 aa)) enclose the GMPS ATP-PPase domain. 233-239 (SGGVDSS) is a binding site for ATP.

Homodimer.

It carries out the reaction XMP + L-glutamine + ATP + H2O = GMP + L-glutamate + AMP + diphosphate + 2 H(+). It functions in the pathway purine metabolism; GMP biosynthesis; GMP from XMP (L-Gln route): step 1/1. In terms of biological role, catalyzes the synthesis of GMP from XMP. This chain is GMP synthase [glutamine-hydrolyzing], found in Streptococcus pneumoniae (strain P1031).